Here is a 697-residue protein sequence, read N- to C-terminus: Phenylalanine--tRNA ligase beta subunit, chloroplastic (697 aa).

The 86-residue stretch at 283-368 folds into the B5 domain; it reads NISRILFIDK…RIYGFDNFIS (86 aa). Residues Asp346, Asp352, Glu355, and Glu356 each coordinate Mg(2+). The region spanning 609 to 697 is the FDX-ACB domain; it reads SSYPSLTRDI…IDDLLNEYKL (89 aa).

It belongs to the phenylalanyl-tRNA synthetase beta subunit family. Type 1 subfamily. As to quaternary structure, tetramer of two alpha and two beta subunits. The cofactor is Mg(2+).

Its subcellular location is the plastid. The protein resides in the chloroplast. It catalyses the reaction tRNA(Phe) + L-phenylalanine + ATP = L-phenylalanyl-tRNA(Phe) + AMP + diphosphate + H(+). The sequence is that of Phenylalanine--tRNA ligase beta subunit, chloroplastic from Gracilaria tenuistipitata var. liui (Red alga).